The chain runs to 157 residues: MKQKILIRIAMTDDTTRAKAMKTAVQFKGVNAVEIKGDHRNQIEVTGVEVDMIALINTLRKKVAFAELVSVAKVEPPKDGDKKPEEEKKPEEKKPEEKKPEEKKPEPCCQPWQKPEPCYQPWPHDGYGVPSSYPYPCDPYNQIGEPVYNQDPNCRIM.

Residues 2–71 form the HMA domain; it reads KQKILIRIAM…KVAFAELVSV (70 aa). A disordered region spans residues 73–115; sequence KVEPPKDGDKKPEEEKKPEEKKPEEKKPEEKKPEPCCQPWQKP. Basic and acidic residues predominate over residues 75-106; that stretch reads EPPKDGDKKPEEEKKPEEKKPEEKKPEEKKPE. Cysteine 154 is subject to Cysteine methyl ester. Cysteine 154 carries S-farnesyl cysteine lipidation. Residues 155-157 constitute a propeptide, removed in mature form; that stretch reads RIM.

It belongs to the HIPP family.

Its function is as follows. Probable heavy-metal-binding protein. This is Heavy metal-associated isoprenylated plant protein 16 from Arabidopsis thaliana (Mouse-ear cress).